The following is a 2297-amino-acid chain: Serine/threonine-protein kinase WNK2 (2297 aa).

A compositionally biased stretch (basic and acidic residues) spans 1–10 (MDGDGGRRDV). 2 disordered regions span residues 1–75 (MDGD…QRRV) and 89–183 (ARGR…EDDL). An omega-N-methylarginine mark is found at arginine 19 and arginine 30. Serine 45 is subject to Phosphoserine. Residues 92-120 (RPAAPAPAALVAQPGAPGAPADAGPEPVG) are compositionally biased toward low complexity. A compositionally biased stretch (basic and acidic residues) spans 142–172 (GPREEAAATVRKEDEGAAEAKPEPGRTRRDE). Acidic residues predominate over residues 173-182 (PEEEEDDEDD). A Protein kinase domain is found at 195–453 (LKFDIELGRG…IKDLLSHAFF (259 aa)). ATP-binding positions include serine 205, 275–278 (TELM), and lysine 325. Residue aspartate 342 is the Proton acceptor of the active site. A phosphoserine; by autocatalysis mark is found at serine 352 and serine 356. At serine 560 the chain carries Phosphoserine. 8 disordered regions span residues 579–630 (AQAG…DSQS), 699–751 (FPDP…PVVP), 917–1022 (PQMA…PGSQ), 1117–1185 (PVQE…ERAS), 1262–1297 (SEDTDADRGSDPGTSPPHLSTCGLGTGEESRQSQAN), 1323–1345 (APEAPESSPPLPLSSLPPEASQG), 1374–1480 (SAQS…HEAP), and 1492–1586 (PCTP…DSTI). Residues 604-625 (PTSATSLASDSTFDSGQGSTVY) show a composition bias toward polar residues. Composition is skewed to pro residues over residues 709-740 (VLPPPSTPMPTGPGQPAPPGQQPPPLAQPTPL) and 939-1007 (PPQP…PLQP). Position 1150 is a phosphoserine (serine 1150). The span at 1167-1178 (ARKHHRRSTRAR) shows a compositional bias: basic residues. A Phosphoserine modification is found at serine 1262. A compositionally biased stretch (polar residues) spans 1392-1406 (SKEQPSFLASQQLLS). Positions 1411–1426 (SNPPGAPPAPLAPSSP) are enriched in pro residues. Composition is skewed to polar residues over residues 1439–1453 (ATSTMPEPASGTASQ) and 1461–1473 (QGLTSELETSQPL). The span at 1510–1520 (EPLPPPAPEPS) shows a compositional bias: pro residues. Low complexity predominate over residues 1526–1544 (PQPALGQPAPLLPAAVGAV). Residues 1552–1565 (PSPPLGPTVPPQPP) are compositionally biased toward pro residues. Serine 1588 bears the Phosphoserine mark. Basic and acidic residues predominate over residues 1621–1631 (TLEPLRGDQPR). A disordered region spans residues 1621–1865 (TLEPLRGDQP…PVQKQASLPV (245 aa)). Residues 1675–1688 (QGTSSSMTAESSPR) are compositionally biased toward polar residues. Serine 1685 bears the Phosphoserine mark. A compositionally biased stretch (basic and acidic residues) spans 1721-1731 (ARVEPTDRDGG). A phosphoserine mark is found at serine 1736, serine 1817, serine 1818, serine 1862, and serine 1889. Disordered regions lie at residues 1970–1990 (NVGFFHTAPPTGRRRKTSKSK) and 2011–2031 (TGHLADSSRGPPAKDPAQASV). Residues 1981 to 1990 (GRRRKTSKSK) are compositionally biased toward basic residues. Serine 2067 carries the phosphoserine modification. Disordered regions lie at residues 2123–2142 (SRSSTSSLAPGPEPGPQPAL) and 2269–2297 (CCGHSTQPRGGQRVGSKTASFAASDPVRS). The span at 2272–2289 (HSTQPRGGQRVGSKTASF) shows a compositional bias: polar residues.

It belongs to the protein kinase superfamily. Ser/Thr protein kinase family. WNK subfamily. Forms a complex with the phosphorylated form of STK39. Requires Mg(2+) as cofactor. Autophosphorylated. Autophosphorylation at Ser-352 and Ser-356 promotes its activity. Expressed in various cancer cell lines (at protein level). Predominantly expressed in heart, brain, skeletal muscle and colon.

The protein localises to the cytoplasm. The protein resides in the cell membrane. The enzyme catalyses L-seryl-[protein] + ATP = O-phospho-L-seryl-[protein] + ADP + H(+). It carries out the reaction L-threonyl-[protein] + ATP = O-phospho-L-threonyl-[protein] + ADP + H(+). With respect to regulation, activation requires autophosphorylation of Ser-356 and, to a lower extent, Ser-352. Serine/threonine-protein kinase component of the WNK2-SPAK/OSR1 kinase cascade, which plays an important role in the regulation of electrolyte homeostasis, cell signaling, survival, and proliferation. The WNK2-SPAK/OSR1 kinase cascade is composed of WNK2, which mediates phosphorylation and activation of downstream kinases OXSR1/OSR1 and STK39/SPAK. Following activation, OXSR1/OSR1 and STK39/SPAK catalyze phosphorylation of ion cotransporters, regulating their activity. Acts as an activator and inhibitor of sodium-coupled chloride cotransporters and potassium-coupled chloride cotransporters respectively. Activates SLC12A2, SCNN1A, SCNN1B, SCNN1D and SGK1 and inhibits SLC12A5. Negatively regulates the EGF-induced activation of the ERK/MAPK-pathway and the downstream cell cycle progression. Affects MAPK3/MAPK1 activity by modulating the activity of MAP2K1 and this modulation depends on phosphorylation of MAP2K1 by PAK1. WNK2 acts by interfering with the activity of PAK1 by controlling the balance of the activity of upstream regulators of PAK1 activity, RHOA and RAC1, which display reciprocal activity. This Homo sapiens (Human) protein is Serine/threonine-protein kinase WNK2.